The chain runs to 963 residues: Phosphoenolpyruvate carboxylase 2 (963 aa).

Ser11 carries the phosphoserine modification. Active-site residues include His172 and Lys599. Position 701 is a phosphoserine (Ser701).

This sequence belongs to the PEPCase type 1 family. As to quaternary structure, homotetramer. It depends on Mg(2+) as a cofactor. Expressed in all plant organs, with higher levels in stems and leaves.

The protein resides in the cytoplasm. It carries out the reaction oxaloacetate + phosphate = phosphoenolpyruvate + hydrogencarbonate. Its activity is regulated as follows. By light-reversible phosphorylation. Its function is as follows. Through the carboxylation of phosphoenolpyruvate (PEP) it forms oxaloacetate, a four-carbon dicarboxylic acid source for the tricarboxylic acid cycle. The protein is Phosphoenolpyruvate carboxylase 2 (PPC2) of Arabidopsis thaliana (Mouse-ear cress).